Here is a 319-residue protein sequence, read N- to C-terminus: Probable cell division protein WhiA (319 aa).

The H-T-H motif DNA-binding region spans 277-310 (SLEELGKLAEPAMTKDAIAGRIRRLLCLADKRAK).

Belongs to the WhiA family.

Its function is as follows. Involved in cell division and chromosome segregation. The sequence is that of Probable cell division protein WhiA from Tropheryma whipplei (strain Twist) (Whipple's bacillus).